We begin with the raw amino-acid sequence, 208 residues long: Recombination protein RecR (208 aa).

The C4-type zinc-finger motif lies at 60 to 75; the sequence is CKVCHNICDDEVCSIC. The Toprim domain occupies 83–178; it reads SLVCVVENIK…RISVIARGVS (96 aa).

It belongs to the RecR family.

In terms of biological role, may play a role in DNA repair. It seems to be involved in an RecBC-independent recombinational process of DNA repair. It may act with RecF and RecO. In Parabacteroides distasonis (strain ATCC 8503 / DSM 20701 / CIP 104284 / JCM 5825 / NCTC 11152), this protein is Recombination protein RecR.